The sequence spans 358 residues: CRS2-associated factor 2, mitochondrial (358 aa).

The N-terminal 28 residues, 1–28 (MLSIRRSLTLAKEPKDLFLFLCNLRARC), are a transit peptide targeting the mitochondrion. The segment at 35 to 64 (DPPFSPLSKPTKPPKEKKKQKTKKQDQSSE) is disordered. 2 CRM domains span residues 141-239 (ETLT…SRPI) and 261-357 (DGLE…ELVT).

In terms of assembly, part of large ribonucleo-protein complexes that include group IIB introns.

The protein localises to the mitochondrion. In terms of biological role, may be involved in the splicing of group IIB introns in mitochondria. This chain is CRS2-associated factor 2, mitochondrial, found in Arabidopsis thaliana (Mouse-ear cress).